The primary structure comprises 385 residues: U6 small nuclear RNA (adenine-(43)-N(6))-methyltransferase (385 aa).

S-adenosyl-L-methionine contacts are provided by Arg54, Gly83, Glu106, and Asn155.

It belongs to the methyltransferase superfamily. METTL16/RlmF family.

Its subcellular location is the cytoplasm. It localises to the nucleus. It carries out the reaction adenosine in U6 snRNA + S-adenosyl-L-methionine = N(6)-methyladenosine in U6 snRNA + S-adenosyl-L-homocysteine + H(+). RNA N6-methyltransferase that mediates N6-methylation of adenine of U6 small nuclear RNA (U6 snRNA). The chain is U6 small nuclear RNA (adenine-(43)-N(6))-methyltransferase from Schizosaccharomyces pombe (strain 972 / ATCC 24843) (Fission yeast).